Consider the following 353-residue polypeptide: Photosystem II protein D1 (353 aa).

Thr2 is modified (N-acetylthreonine). Thr2 is subject to Phosphothreonine. 3 consecutive transmembrane segments (helical) span residues 29-46, 118-133, and 142-156; these read YIGWFGVLMIPTLLTATS, HFLLGVACYMGREWEL, and WIAVAYSAPVAAATA. His118 is a chlorophyll a binding site. A pheophytin a-binding site is contributed by Tyr126. The [CaMn4O5] cluster site is built by Asp170 and Glu189. The helical transmembrane segment at 197–218 threads the bilayer; that stretch reads FHMLGVAGVFGGSLFSAMHGSL. Residue His198 participates in chlorophyll a binding. A quinone is bound by residues His215 and 264–265; that span reads SF. His215 provides a ligand contact to Fe cation. Fe cation is bound at residue His272. A helical transmembrane segment spans residues 274 to 288; sequence FLAAWPVVGIWFTAL. [CaMn4O5] cluster is bound by residues His332, Glu333, Asp342, and Ala344. The propeptide occupies 345–353; sequence AVEAPSTNG.

Belongs to the reaction center PufL/M/PsbA/D family. As to quaternary structure, PSII is composed of 1 copy each of membrane proteins PsbA, PsbB, PsbC, PsbD, PsbE, PsbF, PsbH, PsbI, PsbJ, PsbK, PsbL, PsbM, PsbT, PsbX, PsbY, PsbZ, Psb30/Ycf12, at least 3 peripheral proteins of the oxygen-evolving complex and a large number of cofactors. It forms dimeric complexes. The D1/D2 heterodimer binds P680, chlorophylls that are the primary electron donor of PSII, and subsequent electron acceptors. It shares a non-heme iron and each subunit binds pheophytin, quinone, additional chlorophylls, carotenoids and lipids. D1 provides most of the ligands for the Mn4-Ca-O5 cluster of the oxygen-evolving complex (OEC). There is also a Cl(-1) ion associated with D1 and D2, which is required for oxygen evolution. The PSII complex binds additional chlorophylls, carotenoids and specific lipids. is required as a cofactor. In terms of processing, tyr-161 forms a radical intermediate that is referred to as redox-active TyrZ, YZ or Y-Z. Post-translationally, C-terminally processed by CTPA; processing is essential to allow assembly of the oxygen-evolving complex and thus photosynthetic growth.

Its subcellular location is the plastid. The protein localises to the chloroplast thylakoid membrane. The enzyme catalyses 2 a plastoquinone + 4 hnu + 2 H2O = 2 a plastoquinol + O2. In terms of biological role, photosystem II (PSII) is a light-driven water:plastoquinone oxidoreductase that uses light energy to abstract electrons from H(2)O, generating O(2) and a proton gradient subsequently used for ATP formation. It consists of a core antenna complex that captures photons, and an electron transfer chain that converts photonic excitation into a charge separation. The D1/D2 (PsbA/PsbD) reaction center heterodimer binds P680, the primary electron donor of PSII as well as several subsequent electron acceptors. This chain is Photosystem II protein D1, found in Lepidium virginicum (Virginia pepperweed).